Here is a 134-residue protein sequence, read N- to C-terminus: uncharacterized protein (134 aa).

The N-terminal stretch at 1-23 (MWHLRCSNWRGSGVFGMCFSLSG) is a signal peptide. Cys24 is lipidated: N-palmitoyl cysteine. Cys24 carries S-diacylglycerol cysteine lipidation.

It localises to the cell membrane. This is an uncharacterized protein from Treponema pallidum (strain Nichols).